The sequence spans 526 residues: Lysine--tRNA ligase (526 aa).

Mg(2+)-binding residues include Glu-431 and Glu-438.

It belongs to the class-II aminoacyl-tRNA synthetase family. As to quaternary structure, homodimer. The cofactor is Mg(2+).

It is found in the cytoplasm. The catalysed reaction is tRNA(Lys) + L-lysine + ATP = L-lysyl-tRNA(Lys) + AMP + diphosphate. In Chlamydia trachomatis serovar D (strain ATCC VR-885 / DSM 19411 / UW-3/Cx), this protein is Lysine--tRNA ligase (lysS).